The chain runs to 241 residues: Small ribosomal subunit protein uS2 (241 aa).

This sequence belongs to the universal ribosomal protein uS2 family.

This chain is Small ribosomal subunit protein uS2, found in Cronobacter sakazakii (strain ATCC BAA-894) (Enterobacter sakazakii).